The chain runs to 285 residues: TATA box-binding protein-associated factor RNA polymerase I subunit D (285 aa).

2 disordered regions span residues 1–49 (MAQS…RIPT) and 85–112 (KKKR…TRNI). The segment covering 21 to 39 (GNQSDDSSNSSLFKTQCVP) has biased composition (polar residues). Phosphoserine is present on serine 24. Residues 85-104 (KKKRKKRKKRKYKPKLRRQG) are compositionally biased toward basic residues. At serine 134 the chain carries Phosphoserine. The disordered stretch occupies residues 193 to 219 (HKYMDDDGPLSPIEEPSTEDEATDPQS). Residue serine 229 is modified to Phosphoserine. Composition is skewed to basic and acidic residues over residues 242–264 (NLEQ…KDAT) and 273–285 (KGGE…SEVS). Residues 242-285 (NLEQGKIKKESAFSKKSKAKDATQRGNRRSWKGGEHACLHSEVS) are disordered.

In terms of assembly, component of the transcription factor SL1/TIF-IB complex, composed of TBP and at least TAF1A, TAF1B, TAF1C and TAF1D. Interacts with UBTF.

Its subcellular location is the nucleus. In terms of biological role, component of the transcription factor SL1/TIF-IB complex, which is involved in the assembly of the PIC (preinitiation complex) during RNA polymerase I-dependent transcription. The rate of PIC formation probably is primarily dependent on the rate of association of SL1/TIF-IB with the rDNA promoter. SL1/TIF-IB is involved in stabilization of nucleolar transcription factor 1/UBTF on rDNA. Formation of SL1/TIF-IB excludes the association of TBP with TFIID subunits. This chain is TATA box-binding protein-associated factor RNA polymerase I subunit D (Taf1d), found in Rattus norvegicus (Rat).